We begin with the raw amino-acid sequence, 422 residues long: MLDLEVVPERSLGNEQWEFTLGMPLAQAVAILQKHCRIIKNVQVLYSEQSPLSHDLILNLTQDGIKLLFDAFNQRLKVIEVYDLTKVKLKYCGVHFNSQAIAPTIEQIDQSFGATHPGVYNSAEQLFHLNFRGLSFSFQLDSWTEAPKYEPNFAHGLASLQIPHGATVKRMYIYSGNSLQDTKAPMMPLSCFLGNVYAESVDVIRDGTGPSGLRLRLLAAGCGPGVLADAKMRVFERAVYFGDSCQDVLSMLGSPHKVFYKSEDKMKIHSPSPHKQVPSKCNDYFFNYFTLGVDILFDANTHKVKKFVLHTNYPGHYNFNIYHRCEFKIPLAIKKENAGGQTEICTTYSKWDSIQELLGHPVEKPVVLHRSSSPNNTNPFGSTFCFGLQRMIFEVMQNNHIASVTLYGPPRPGAHLRTAELP.

Belongs to the PHAF1 family. Interacts with BCAS3; the interaction is requrired for the association with the phagophore.

It localises to the cytoplasm. Its subcellular location is the preautophagosomal structure. Functionally, plays a regulatory role in autophagic activity. In complex with BCAS3, associates with the autophagosome formation site during both non-selective and selective autophagy. The protein is Phagosome assembly factor 1 (Phaf1) of Rattus norvegicus (Rat).